Consider the following 82-residue polypeptide: RNA-binding protein Hfq (82 aa).

Residues 11–71 enclose the Sm domain; it reads DTFLNHVRKT…ISTIMPGAPI (61 aa).

This sequence belongs to the Hfq family. In terms of assembly, homohexamer.

Its function is as follows. RNA chaperone that binds small regulatory RNA (sRNAs) and mRNAs to facilitate mRNA translational regulation in response to envelope stress, environmental stress and changes in metabolite concentrations. Also binds with high specificity to tRNAs. The protein is RNA-binding protein Hfq of Rhodopseudomonas palustris (strain BisA53).